The sequence spans 455 residues: Beta-glucosidase A (455 aa).

The active-site Proton donor is E165. The Nucleophile role is filled by E363.

Belongs to the glycosyl hydrolase 1 family.

It carries out the reaction Hydrolysis of terminal, non-reducing beta-D-glucosyl residues with release of beta-D-glucose.. This is Beta-glucosidase A (bglA) from Caldicellulosiruptor saccharolyticus (Caldocellum saccharolyticum).